The following is a 282-amino-acid chain: ATP synthase gamma chain (282 aa).

This sequence belongs to the ATPase gamma chain family. F-type ATPases have 2 components, CF(1) - the catalytic core - and CF(0) - the membrane proton channel. CF(1) has five subunits: alpha(3), beta(3), gamma(1), delta(1), epsilon(1). CF(0) has three main subunits: a, b and c.

The protein resides in the cell membrane. Produces ATP from ADP in the presence of a proton gradient across the membrane. The gamma chain is believed to be important in regulating ATPase activity and the flow of protons through the CF(0) complex. The chain is ATP synthase gamma chain from Clostridium botulinum (strain Langeland / NCTC 10281 / Type F).